The primary structure comprises 178 residues: Large ribosomal subunit protein uL6 (178 aa).

It belongs to the universal ribosomal protein uL6 family. Part of the 50S ribosomal subunit.

This protein binds to the 23S rRNA, and is important in its secondary structure. It is located near the subunit interface in the base of the L7/L12 stalk, and near the tRNA binding site of the peptidyltransferase center. The protein is Large ribosomal subunit protein uL6 of Nitratiruptor sp. (strain SB155-2).